Reading from the N-terminus, the 227-residue chain is 2,3-bisphosphoglycerate-dependent phosphoglycerate mutase (227 aa).

Substrate contacts are provided by residues 7–14 (RHGFSEWN), 20–21 (TG), Arg-59, 86–89 (ERHY), Lys-97, 113–114 (RR), and 182–183 (GN). Catalysis depends on His-8, which acts as the Tele-phosphohistidine intermediate. The active-site Proton donor/acceptor is Glu-86.

It belongs to the phosphoglycerate mutase family. BPG-dependent PGAM subfamily. As to quaternary structure, homodimer.

It catalyses the reaction (2R)-2-phosphoglycerate = (2R)-3-phosphoglycerate. It functions in the pathway carbohydrate degradation; glycolysis; pyruvate from D-glyceraldehyde 3-phosphate: step 3/5. Functionally, catalyzes the interconversion of 2-phosphoglycerate and 3-phosphoglycerate. This is 2,3-bisphosphoglycerate-dependent phosphoglycerate mutase from Actinobacillus pleuropneumoniae serotype 5b (strain L20).